Consider the following 491-residue polypeptide: FAD-dependent monooxygenase cle3 (491 aa).

Residues glutamate 55, glycine 69, arginine 128, aspartate 330, and alanine 343 each contribute to the FAD site. Asparagine 380 carries N-linked (GlcNAc...) asparagine glycosylation. A helical transmembrane segment spans residues 462–482 (STVVWTSLGILGLVVFLFLLF).

It belongs to the paxM FAD-dependent monooxygenase family. Requires FAD as cofactor.

The protein resides in the membrane. Its pathway is secondary metabolite biosynthesis; terpenoid biosynthesis. Functionally, FAD-dependent monooxygenase; part of the cluster A that mediates the biosynthesis of chevalone E and its oxidized derivatives that possess a unique five-membered lactone ring and can synergistically enhance the cytotoxicity of doxorubicin (DOX) in breast cancer cells. Within the pathway, cle3 takes part to the biosynthesis of the molecular scaffold by catalyzing the formation of an (S)-epoxide ring at the terminal olefin of the geranylgeranyl group. The molecular scaffold is commonly biosynthesized by a series of enzymes including the non-reducing polyketide synthase (NR-PKS) cle1 that produces the alpha-pyrone triacetic acid lactone (TAL); The membrane-bound prenyltransferase cle5 that accepts TAL as its substrate to perform a C-3 geranylgeranylation reaction, in which the pathway-dedicated GGPS cle6 is required to provide GGPP, the other substrate of cle5; the FAD-dependent monooxygenase Cle3 that forms an (S)-epoxide ring at the terminal olefin of the geranylgeranyl group; and the terpene cyclase Cle7 that catalyzes the cyclization of the prenyl group that yields the pentacyclic pathway intermediate chevalone E. Chevalone E can derivatize into seven new oxidized analogs by the cytochrome P450 monooxygenases cle2 (acting at C-20) and cle4 (acting at C-11 and C-12). This chain is FAD-dependent monooxygenase cle3, found in Aspergillus versicolor.